The primary structure comprises 461 residues: DNA polymerase delta subunit 3 (461 aa).

Disordered stretches follow at residues 148-229, 249-380, and 399-461; these read VAQA…SAKG, VPGQ…KRVL, and YESE…CQKK. The span at 155–172 shows a compositional bias: polar residues; it reads ARSSSQTPSDTSAVSTPP. Basic and acidic residues predominate over residues 205–214; sequence DANKEPKAKE. Over residues 215-228 the composition is skewed to low complexity; the sequence is APSVSAASSKPSAK. Residues 279–304 show a composition bias toward basic and acidic residues; that stretch reads KPGRKTEPAKIQQKDKKSKMKRMDKS. A compositionally biased stretch (basic residues) spans 371 to 380; that stretch reads GKKRKRKRVL. The segment covering 427-436 has biased composition (basic and acidic residues); sequence VKKEPKEERK. Positions 451–458 match the PIP-box motif; the sequence is QISIMGFC.

In terms of assembly, component of both the DNA polymerase delta and DNA polymerase zeta complexes. The tetrameric DNA polymerase delta complex (Pol-delta4), which consists of POLD1/p125, POLD2/p50, POLD3/p66/p68 and POLD4/p12, with POLD1 bearing DNA polymerase and 3' to 5' proofreading exonuclease activities.

The protein resides in the cytoplasm. It localises to the nucleus. In terms of biological role, accessory component of both the DNA polymerase delta complex and the DNA polymerase zeta complex. As a component of the trimeric and tetrameric DNA polymerase delta complexes (Pol-delta3 and Pol-delta4, respectively), plays a role in high fidelity genome replication, including in lagging strand synthesis, and repair. Required for optimal Pol-delta activity. Stabilizes the Pol-delta complex and plays a major role in Pol-delta stimulation by PCNA. Pol-delta3 and Pol-delta4 are characterized by the absence or the presence of POLD4. They exhibit differences in catalytic activity. Most notably, Pol-delta3 shows higher proofreading activity than Pol-delta4. Although both Pol-delta3 and Pol-delta4 process Okazaki fragments in vitro, Pol-delta3 may also be better suited to fulfill this task, exhibiting near-absence of strand displacement activity compared to Pol-delta4 and stalling on encounter with the 5'-blocking oligonucleotides. Pol-delta3 idling process may avoid the formation of a gap, while maintaining a nick that can be readily ligated. Along with DNA polymerase kappa, DNA polymerase delta carries out approximately half of nucleotide excision repair (NER) synthesis following UV irradiation. In this context, POLD3, along with PCNA and RFC1-replication factor C complex, is required to recruit POLD1, the catalytic subunit of the polymerase delta complex, to DNA damage sites. Under conditions of DNA replication stress, required for the repair of broken replication forks through break-induced replication (BIR). Involved in the translesion synthesis (TLS) of templates carrying O6-methylguanine or abasic sites performed by Pol-delta4, independently of DNA polymerase zeta (REV3L) or eta (POLH). Facilitates abasic site bypass by DNA polymerase delta by promoting extension from the nucleotide inserted opposite the lesion. Also involved in TLS, as a component of the tetrameric DNA polymerase zeta complex. Along with POLD2, dramatically increases the efficiency and processivity of DNA synthesis of the DNA polymerase zeta complex compared to the minimal zeta complex, consisting of only REV3L and REV7. The chain is DNA polymerase delta subunit 3 (POLD3) from Gallus gallus (Chicken).